A 388-amino-acid chain; its full sequence is MNYQPTPEDRFTFGLWTVGWQGRDPFGDATRRALDPVESVRRLAELGAHGVTFHDDDLIPFGSSDSEREEHVKRFRQALDDTGMKVPMATTNLFTHPVFKDGGFTANDRDVRRYALRKTIRNIDLAVELGAETYVAWGGREGAESGGAKDVRDALDRMKEAFDLLGEYVTSQGYDIRFAIEPKPNEPRGDILLPTVGHALAFIERLERPELYGVNPEVGHEQMAGLNFPHGIAQALWAGKLFHIDLNGQNGIKYDQDLRFGAGDLRAAFWLVDLLESAGYSGPRHFDFKPPRTEDFDGVWASAAGCMRNYLILKERAAAFRADPEVQEALRASRLDELARPTAADGLQALLDDRSAFEEFDVDAAAARGMAFERLDQLAMDHLLGARG.

Active-site residues include H54 and D57. The Mg(2+) site is built by E181, E217, H220, D245, D255, D257, and D287.

It belongs to the xylose isomerase family. As to quaternary structure, homotetramer. Mg(2+) serves as cofactor.

It is found in the cytoplasm. It catalyses the reaction alpha-D-xylose = alpha-D-xylulofuranose. Its function is as follows. Involved in D-xylose catabolism. The polypeptide is Xylose isomerase (xylA) (Streptomyces rubiginosus).